The following is a 413-amino-acid chain: Phosphopentomutase (413 aa).

D11, D306, H311, D347, H348, and H359 together coordinate Mn(2+).

It belongs to the phosphopentomutase family. It depends on Mn(2+) as a cofactor.

The protein resides in the cytoplasm. It carries out the reaction 2-deoxy-alpha-D-ribose 1-phosphate = 2-deoxy-D-ribose 5-phosphate. The enzyme catalyses alpha-D-ribose 1-phosphate = D-ribose 5-phosphate. It functions in the pathway carbohydrate degradation; 2-deoxy-D-ribose 1-phosphate degradation; D-glyceraldehyde 3-phosphate and acetaldehyde from 2-deoxy-alpha-D-ribose 1-phosphate: step 1/2. Isomerase that catalyzes the conversion of deoxy-ribose 1-phosphate (dRib-1-P) and ribose 1-phosphate (Rib-1-P) to deoxy-ribose 5-phosphate (dRib-5-P) and ribose 5-phosphate (Rib-5-P), respectively. In Helicobacter pylori (strain P12), this protein is Phosphopentomutase.